A 283-amino-acid polypeptide reads, in one-letter code: NAD kinase (283 aa).

Residue D65 is the Proton acceptor of the active site. NAD(+) contacts are provided by residues 65–66, 139–140, R150, R167, D169, 180–185, and Q239; these read DG, ND, and TGYSVS.

This sequence belongs to the NAD kinase family. A divalent metal cation serves as cofactor.

The protein resides in the cytoplasm. It catalyses the reaction NAD(+) + ATP = ADP + NADP(+) + H(+). In terms of biological role, involved in the regulation of the intracellular balance of NAD and NADP, and is a key enzyme in the biosynthesis of NADP. Catalyzes specifically the phosphorylation on 2'-hydroxyl of the adenosine moiety of NAD to yield NADP. This Nitratidesulfovibrio vulgaris (strain DSM 19637 / Miyazaki F) (Desulfovibrio vulgaris) protein is NAD kinase.